A 365-amino-acid polypeptide reads, in one-letter code: MKTLQTSPKKDGYRMPGEFEAHKDVYLLWPERPDNWREGAKPAQATFAKVAETIAQFESVTVGVSDRQYTNARHMLADNIQVVEMSNNDSWIRDCGPTFVVNDKGDSRGVDWTFNAWGGLVDGLYFPWDKDDRVAQKVCEIEGRDRYRLDDLVLEGGSTHVDGEGTLLVTEECLLSDGRNPQLSKEQIESILKEYLNVEKIIWLKKGIYLDETNGHVDNIANFVKPGQVVLAWTDDQSDPQYAISKENYDMLINETDAKGRKLQVEKLYLPKPILITEAESQGVDTVDGTLPRLAGDRLAASYVNYYTANGGIVFPLFNDPMDEKAQEILQKLYPDRKIVGVPAREILLGGGNIHCITQQIPAGR.

The active-site Amidino-cysteine intermediate is the C356.

The protein belongs to the agmatine deiminase family.

It catalyses the reaction agmatine + H2O = N-carbamoylputrescine + NH4(+). The polypeptide is Putative agmatine deiminase (Latilactobacillus sakei subsp. sakei (strain 23K) (Lactobacillus sakei subsp. sakei)).